The sequence spans 348 residues: Heat-inducible transcription repressor HrcA (348 aa).

Belongs to the HrcA family.

Functionally, negative regulator of class I heat shock genes (grpE-dnaK-dnaJ and groELS operons). Prevents heat-shock induction of these operons. This is Heat-inducible transcription repressor HrcA from Syntrophobacter fumaroxidans (strain DSM 10017 / MPOB).